A 500-amino-acid chain; its full sequence is Protein C13 (500 aa).

The 63-residue stretch at 27–89 (EEIVFIMTVG…IETGIVTIDL (63 aa)) folds into the BTB domain. Kelch repeat units follow at residues 301-348 (ILYL…IFKN), 349-395 (RIYV…GTDN), 397-440 (LYVV…YHHG), and 441-490 (YIYM…IIED).

This sequence belongs to the poxviruses Kelch family.

This Swinepox virus (strain Kasza) (SWPV) protein is Protein C13.